A 63-amino-acid polypeptide reads, in one-letter code: Cecropin-A1 (63 aa).

Positions Met-1–Ala-23 are cleaved as a signal peptide. Position 62 is an arginine amide (Arg-62).

Belongs to the cecropin family.

The protein localises to the secreted. Cecropins have lytic and antibacterial activity against several Gram-positive and Gram-negative bacteria. This is Cecropin-A1 (CecA1) from Drosophila mauritiana (Fruit fly).